Consider the following 141-residue polypeptide: Transcription antitermination protein NusB (141 aa).

It belongs to the NusB family.

Its function is as follows. Involved in transcription antitermination. Required for transcription of ribosomal RNA (rRNA) genes. Binds specifically to the boxA antiterminator sequence of the ribosomal RNA (rrn) operons. In Neisseria meningitidis serogroup A / serotype 4A (strain DSM 15465 / Z2491), this protein is Transcription antitermination protein NusB.